A 264-amino-acid chain; its full sequence is 14-3-3 protein homolog (264 aa).

Over residues 236-258 (SEAPAATEEQQQSSQAPAAQPTE) the composition is skewed to low complexity. Residues 236 to 264 (SEAPAATEEQQQSSQAPAAQPTEGKADQE) form a disordered region.

This sequence belongs to the 14-3-3 family.

The polypeptide is 14-3-3 protein homolog (BMH1) (Candida albicans (strain SC5314 / ATCC MYA-2876) (Yeast)).